Consider the following 659-residue polypeptide: Oligopeptide-binding protein AmiA (659 aa).

The N-terminal stretch at 1 to 22 (MKKNRVFATAGLVLLAAGVLAA) is a signal peptide. A lipid anchor (N-palmitoyl cysteine) is attached at C23. C23 carries the S-diacylglycerol cysteine lipid modification.

Belongs to the bacterial solute-binding protein 5 family.

The protein resides in the cell membrane. Part of the binding-protein-dependent transport system for oligopeptides; probably an oligopeptide binding protein. In Streptococcus pneumoniae serotype 4 (strain ATCC BAA-334 / TIGR4), this protein is Oligopeptide-binding protein AmiA (amiA).